The following is an 830-amino-acid chain: Ribosome biogenesis protein ERB1 (830 aa).

Residues Met-1–Leu-142 are disordered. Acidic residues-rich tracts occupy residues Val-35–Gly-44 and Met-52–Ser-109. A compositionally biased stretch (basic and acidic residues) spans Glu-131–Leu-142. WD repeat units follow at residues Pro-481 to Arg-520, Leu-523 to Ile-563, Lys-660 to Thr-698, Ser-701 to Lys-740, Tyr-744 to Gln-783, and Ile-799 to Ser-830.

The protein belongs to the WD repeat BOP1/ERB1 family. In terms of assembly, component of the NOP7 complex, composed of ERB1, NOP7 and YTM1. The complex is held together by ERB1, which interacts with NOP7 via its N-terminal domain and with YTM1 via a high-affinity interaction between the seven-bladed beta-propeller domains of the 2 proteins. The NOP7 complex associates with the 66S pre-ribosome.

The protein resides in the nucleus. Its subcellular location is the nucleolus. It localises to the nucleoplasm. Component of the NOP7 complex, which is required for maturation of the 25S and 5.8S ribosomal RNAs and formation of the 60S ribosome. This is Ribosome biogenesis protein ERB1 from Cryptococcus neoformans var. neoformans serotype D (strain JEC21 / ATCC MYA-565) (Filobasidiella neoformans).